A 94-amino-acid polypeptide reads, in one-letter code: Co-chaperonin GroES (94 aa).

This sequence belongs to the GroES chaperonin family. As to quaternary structure, heptamer of 7 subunits arranged in a ring. Interacts with the chaperonin GroEL.

The protein resides in the cytoplasm. In terms of biological role, together with the chaperonin GroEL, plays an essential role in assisting protein folding. The GroEL-GroES system forms a nano-cage that allows encapsulation of the non-native substrate proteins and provides a physical environment optimized to promote and accelerate protein folding. GroES binds to the apical surface of the GroEL ring, thereby capping the opening of the GroEL channel. This is Co-chaperonin GroES from Bacillus cereus (strain ZK / E33L).